A 357-amino-acid chain; its full sequence is O-methyltransferase 1, chloroplastic (357 aa).

Residues 1-53 constitute a chloroplast transit peptide; sequence MPVLPWLAAAATTPVRRSPPLPATPRALLRLPASSFPPWSNCAKSGLPPRGPF. The disordered stretch occupies residues 50–71; it reads RGPFATAADTPLGGSLPEPEEE.

The protein belongs to the methyltransferase superfamily. LCMT family. Expressed in roots, leaf sheaths, flag leaves and panicles.

Its subcellular location is the plastid. It localises to the chloroplast. The catalysed reaction is N-acetylserotonin + S-adenosyl-L-methionine = melatonin + S-adenosyl-L-homocysteine + H(+). It participates in aromatic compound metabolism; melatonin biosynthesis; melatonin from serotonin: step 1/2. Involved in melatonin biosynthesis. Can function as acetylserotonin O-methyltransferase. Catalyzes the transfer of a methyl group onto N-acetylserotonin, producing melatonin (N-acetyl-5-methoxytryptamine). Involved in the regulation of jasmonate- and brassinosteroid-mediated plant growth and defense responses. This chain is O-methyltransferase 1, chloroplastic, found in Oryza sativa subsp. japonica (Rice).